We begin with the raw amino-acid sequence, 117 residues long: Ribosome-binding factor A (117 aa).

This sequence belongs to the RbfA family. In terms of assembly, monomer. Binds 30S ribosomal subunits, but not 50S ribosomal subunits or 70S ribosomes.

It is found in the cytoplasm. One of several proteins that assist in the late maturation steps of the functional core of the 30S ribosomal subunit. Associates with free 30S ribosomal subunits (but not with 30S subunits that are part of 70S ribosomes or polysomes). Required for efficient processing of 16S rRNA. May interact with the 5'-terminal helix region of 16S rRNA. The polypeptide is Ribosome-binding factor A (Anaplasma marginale (strain St. Maries)).